Consider the following 504-residue polypeptide: Endosomal/lysosomal proton channel TMEM175 (504 aa).

The tract at residues 1–27 is disordered; that stretch reads MSQPRTPEQALDTPGDCPPGRRDEDAG. The Cytoplasmic portion of the chain corresponds to 1–33; the sequence is MSQPRTPEQALDTPGDCPPGRRDEDAGEGIQCS. Thr-6 bears the Phosphothreonine mark. Residues 34-56 traverse the membrane as a helical segment; that stretch reads QRMLSFSDALLSIIATVMILPVT. Positions 35–41 match the RxxxFSD motif 1 motif; sequence RMLSFSD. At 57–77 the chain is on the lumenal side; it reads HTEISPEQQFDRSVQRLLATR. The interval 58–63 is short helix H1-1; the sequence is TEISPE. The interval 65-71 is short helix H2-1; the sequence is QFDRSVQ. Residues 78–100 traverse the membrane as a helical segment; sequence IAVYLMTFLIVTVAWAAHTRLFQ. Over 101-106 the chain is Cytoplasmic; that stretch reads VVGKTD. The chain crosses the membrane as a helical span at residues 107-128; the sequence is DTLALLNLACMMTITFLPYTFS. Residues 129–138 are Lumenal-facing; sequence LMVTFPDVPL. A helical transmembrane segment spans residues 139-160; that stretch reads GIFLFCVCVIAIGVVQALIVGY. Residues 161–184 are Cytoplasmic-facing; the sequence is AFHFPHLLSPQIQRSAHRALYRRH. Residues 185–205 traverse the membrane as a helical segment; the sequence is VLGIVLQGPALCFAAAIFSLF. Residues 206 to 210 lie on the Lumenal side of the membrane; that stretch reads FVPLS. A helical membrane pass occupies residues 211–230; it reads YLLMVTVILLPYVSKVTGWC. Residues 231 to 257 are Cytoplasmic-facing; the sequence is RDRLLGHREPSAHPVEVFSFDLHEPLS. A helical transmembrane segment spans residues 258–282; it reads KERVEAFSDGVYAIVATLLILDICE. The RxxxFSD motif 2 signature appears at 260–266; it reads RVEAFSD. At 283 to 309 the chain is on the lumenal side; that stretch reads DNVPDPKDVKERFSGSLVAALSATGPR. The segment at 288–296 is short helix H1-2; sequence PKDVKERFS. Positions 298 to 304 are short helix H2-2; sequence SLVAALS. The helical transmembrane segment at 310–332 threads the bilayer; it reads FLAYFGSFATVGLLWFAHHSLFL. Over 333 to 338 the chain is Cytoplasmic; sequence HVRKAT. A helical membrane pass occupies residues 339 to 360; the sequence is RAMGLLNTLSLAFVGGLPLAYQ. Topologically, residues 361–375 are lumenal; the sequence is QTSAFARQPRDELER. The chain crosses the membrane as a helical span at residues 376–396; that stretch reads VRVSCTIIFLASIFQLAMWTT. Over 397–416 the chain is Cytoplasmic; the sequence is ALLHQAETLQPSVWFGGREH. A helical membrane pass occupies residues 417–440; that stretch reads VLMFAKLALYPCASLLAFASTCLL. At 441–442 the chain is on the lumenal side; sequence SR. A helical transmembrane segment spans residues 443-469; it reads FSVGIFHLMQIAVPCAFLLLRLLVGLA. Residues 470–504 are Cytoplasmic-facing; the sequence is LATLRVLRGLARPEHPPPAPTGQDDPQSQLLPAPC. The disordered stretch occupies residues 483–504; that stretch reads EHPPPAPTGQDDPQSQLLPAPC. Residues 493-504 are compositionally biased toward polar residues; that stretch reads DDPQSQLLPAPC.

It belongs to the TMEM175 family. Homodimer. Interacts with AKT (AKT1, AKT2 or AKT3); leading to formation of the lysoK(GF) complex, which activates the channel. Interacts with LAMP1; inhibiting the proton channel activity of TMEM175. Interacts with LAMP2; inhibiting the proton channel activity of TMEM175. Widely expressed.

It is found in the endosome membrane. Its subcellular location is the lysosome membrane. It catalyses the reaction H(+)(in) = H(+)(out). The enzyme catalyses K(+)(in) = K(+)(out). Active at low pH (under pH 4.6): proton channel activity is activated by luminal side protons. Polyunsaturated fatty acids, such as arachidonic acid, also activate the channel activity. Proton channel activity is directly inhibited by LAMP1 or LAMP2, facilitating lysosomal acidification. Channel activity is activated following interaction with AKT (AKT1, AKT2 or AKT3): interaction promotes activation from closed to an open state. Activation by AKT is independent of AKT serine/threonine-protein kinase activity. Proton-activated proton channel that catalyzes proton efflux from endosomes and lysosomes to maintain a steady-state pH. Activated at low pH (under pH 4.6) by luminal side protons: selectively mediates lysosomal proton release from lysosomes, eliciting a proton leak that balances V-ATPase activity to maintain pH homeostasis. Regulation of lumenal pH stability is required for autophagosome-lysosome fusion. Also acts as a potassium channel at higher pH, regulating potassium conductance in endosomes and lysosomes. Constitutes the pore-forming subunit of the lysoK(GF) complex, a complex activated by extracellular growth factors. The lysoK(GF) complex is composed of TMEM175 and AKT (AKT1, AKT2 or AKT3), a major target of growth factor receptors: in the complex, TMEM175 channel is opened by conformational changes by AKT, leading to its activation. The lysoK(GF) complex is required to protect neurons against stress-induced damage. The polypeptide is Endosomal/lysosomal proton channel TMEM175 (Homo sapiens (Human)).